The chain runs to 350 residues: uncharacterized protein (350 aa).

The region spanning 164-327 is the Integrase catalytic domain; the sequence is NDPLPGYVEV…EKTRIGARVV (164 aa).

This is an uncharacterized protein from Sinorhizobium fredii (strain NBRC 101917 / NGR234).